We begin with the raw amino-acid sequence, 389 residues long: Na(+)/H(+) antiporter NhaA 1 (389 aa).

The next 11 helical transmembrane spans lie at 12–32, 62–82, 97–117, 128–148, 157–177, 184–204, 220–240, 260–280, 282–302, 331–351, and 365–385; these read VLNEAFGGVLLIVCTLLALLV, FLLWINDGLISIFFFAIGLEL, IVLPFMAALGGILIPAMLFAL, GWAIPTATDTAFALAILMMCG, IFLLSLAIFDDVGAILIIAIF, IVAFVVAGIAILAMLVLNILG, ISVLKSGVHATLAGIITAFFI, FWLAFVILPLFAFANAGVNLS, IDIGAIFSGVSVGIFLGLFVG, LYGVCILTGIGFTMSLFIDGL, and LAILIASFCSGIWGFIYLKFF.

The protein belongs to the NhaA Na(+)/H(+) (TC 2.A.33) antiporter family.

The protein resides in the cell inner membrane. It carries out the reaction Na(+)(in) + 2 H(+)(out) = Na(+)(out) + 2 H(+)(in). Functionally, na(+)/H(+) antiporter that extrudes sodium in exchange for external protons. The protein is Na(+)/H(+) antiporter NhaA 1 of Campylobacter jejuni subsp. jejuni serotype O:6 (strain 81116 / NCTC 11828).